Consider the following 145-residue polypeptide: Large ribosomal subunit protein uL13 (145 aa).

Belongs to the universal ribosomal protein uL13 family. In terms of assembly, part of the 50S ribosomal subunit.

In terms of biological role, this protein is one of the early assembly proteins of the 50S ribosomal subunit, although it is not seen to bind rRNA by itself. It is important during the early stages of 50S assembly. The sequence is that of Large ribosomal subunit protein uL13 from Listeria innocua serovar 6a (strain ATCC BAA-680 / CLIP 11262).